The following is a 402-amino-acid chain: Baeyer-Villiger oxidase notM (402 aa).

This sequence belongs to the questin oxidase family.

In terms of biological role, baeyer-Villiger oxidase; part of the gene cluster that mediates the biosynthesis of notoamide, a fungal indole alkaloid that belongs to a family of natural products containing a characteristic bicyclo[2.2.2]diazaoctane core. The first step of notoamide biosynthesis involves coupling of L-proline and L-tryptophan by the bimodular NRPS notE, to produce cyclo-L-tryptophan-L-proline called brevianamide F. The reverse prenyltransferase notF then acts as a deoxybrevianamide E synthase and converts brevianamide F to deoxybrevianamide E via reverse prenylation at C-2 of the indole ring leading to the bicyclo[2.2.2]diazaoctane core. Deoxybrevianamide E is further hydroxylated at C-6 of the indole ring, likely catalyzed by the cytochrome P450 monooxygenase notG, to yield 6-hydroxy-deoxybrevianamide E. 6-hydroxy-deoxybrevianamide E is a specific substrate of the prenyltransferase notC for normal prenylation at C-7 to produce 6-hydroxy-7-prenyl-deoxybrevianamide, also called notoamide S. As the proposed pivotal branching point in notoamide biosynthesis, notoamide S can be diverted to notoamide E through an oxidative pyran ring closure putatively catalyzed by either notH cytochrome P450 monooxygenase or the notD FAD-linked oxidoreductase. This step would be followed by an indole 2,3-epoxidation-initiated pinacol-like rearrangement catalyzed by the notB FAD-dependent monooxygenase leading to the formation of notoamide C and notoamide D. On the other hand notoamide S is converted to notoamide T by notH (or notD), a bifunctional oxidase that also functions as the intramolecular Diels-Alderase responsible for generation of (+)-notoamide T. To generate antipodal (-)-notoaminide T, notH' (or notD') in Aspergillus versicolor is expected to catalyze a Diels-Alder reaction leading to the opposite stereochemistry. The remaining oxidoreductase notD (or notH) likely catalyzes the oxidative pyran ring formation to yield (+)-stephacidin A. The FAD-dependent monooxygenase notI is highly similar to notB and is predicted to catalyze a similar conversion from (+)-stephacidin A to (-)-notoamide B via the 2,3-epoxidation of (+)-stephacidin A followed by a pinacol-type rearrangement. Finally, it remains unclear which enzyme could be responsible for the final hydroxylation steps leading to notoamide A and sclerotiamide. The function of notM in the notoamide biosynthesis has not been determined yet. This chain is Baeyer-Villiger oxidase notM, found in Aspergillus sp. (strain MF297-2).